Reading from the N-terminus, the 189-residue chain is UPF0301 protein PputGB1_5045 (189 aa).

This sequence belongs to the UPF0301 (AlgH) family.

This chain is UPF0301 protein PputGB1_5045, found in Pseudomonas putida (strain GB-1).